The chain runs to 384 residues: Ribosomal RNA large subunit methyltransferase G (384 aa).

This sequence belongs to the methyltransferase superfamily. RlmG family.

It is found in the cytoplasm. The enzyme catalyses guanosine(1835) in 23S rRNA + S-adenosyl-L-methionine = N(2)-methylguanosine(1835) in 23S rRNA + S-adenosyl-L-homocysteine + H(+). Specifically methylates the guanine in position 1835 (m2G1835) of 23S rRNA. This chain is Ribosomal RNA large subunit methyltransferase G, found in Streptomyces griseus subsp. griseus (strain JCM 4626 / CBS 651.72 / NBRC 13350 / KCC S-0626 / ISP 5235).